A 1255-amino-acid chain; its full sequence is Membrane-associated guanylate kinase, WW and PDZ domain-containing protein 1 (1255 aa).

One can recognise a PDZ 1 domain in the interval 17–105 (ECTVKRGPQG…AVTFKAVRQG (89 aa)). The region spanning 96–287 (AVTFKAVRQG…APITDPSQKF (192 aa)) is the Guanylate kinase-like domain. 103–110 (RQGGRLNK) contributes to the ATP binding site. 2 disordered regions span residues 208-227 (HSLQ…SYND) and 235-265 (HTEN…TLQE). The WW 1 domain maps to 300–333 (GPLPENWEMAYTENGEVYFIDHNAKTTSWLDPRC). Serine 357 bears the Phosphoserine mark. The WW 2 domain maps to 359–392 (LELPAGWEKIEDPVYGVYYVDHINRKTQYENPVL). The segment at 395-462 (KRKRQLEQQQ…QGKPFFTRNP (68 aa)) is disordered. Low complexity predominate over residues 402-414 (QQQQQQQHQQQPQ). Residues 434–444 (PVAPSHPPSNP) show a composition bias toward pro residues. The PDZ 2 domain maps to 471–553 (HTKLRKSSRG…GASVDLELCR (83 aa)). Over residues 585–601 (QETYDSPASHSSKTGKV) the composition is skewed to polar residues. 2 disordered regions span residues 585–622 (QETY…SSHG) and 719–820 (QRGG…GERD). The PDZ 3 domain maps to 642 to 720 (TVHIVKGPMG…GSEVTLLVQR (79 aa)). Phosphoserine occurs at positions 729 and 740. Residues 741-755 (QNSSQHSVSSLRSLH) are compositionally biased toward low complexity. Serine 799 carries the phosphoserine modification. The 83-residue stretch at 840–922 (DIFLWRKETG…QGHVNLTVRR (83 aa)) folds into the PDZ 4 domain. Residues 932 to 984 (ENEVPSPASSHHSSNQPASLTEEKRTPQGSQNSLNTVSSGSGSTSGIGSGGGG) are disordered. 2 stretches are compositionally biased toward polar residues: residues 938–950 (PASS…QPAS) and 958–967 (PQGSQNSLNT). Residues 974–984 (STSGIGSGGGG) show a composition bias toward gly residues. The PDZ 5 domain maps to 997–1093 (DVEIRRGENE…TVTLRIIPGD (97 aa)). Serine 1070 carries the post-translational modification Phosphoserine. Residues 1111–1129 (TTTHAPSQQGTQETRTTTK) show a composition bias toward polar residues. Residues 1111–1142 (TTTHAPSQQGTQETRTTTKPKPDSQFEFKGPQ) are disordered. Positions 1151 to 1233 (TVELERGAKG…RVRLFLRRGD (83 aa)) constitute a PDZ 6 domain.

In terms of assembly, part of a complex composed of AMOTL2, MAGI1 and CDH5, within the complex AMOTL2 acts as a scaffold protein for the interaction of MAGI1 with CDH5. The complex is required for coupling actin fibers to cell junctions in endothelial cells. Interacts through its WW 2 domain with SYNPO and through its PDZ 5 domain with ACTN4. Interacts with cytoplasmic domain of ADGRB1. Interacts via its WW domains with DRPLA. Interacts with ESAM, LRP2 and CXADR. May interact with CTNNB1. Interacts through its PDZ 1 domain with NET1. Interacts with ASIC3 and AMOT. Interacts with FCHSD2. Interacts with IGSF5/JAM4 and through its PDZ 2 and 3 domains with NPHS1 forming a tripartite complex. Interacts with DDN. May interact (via PDZ domain) with RAPGEF2. Interacts with DLL1. Interacts with KCNJ10 and possibly with KCNJ10/KCNJ16 heterodimer; this interaction may facilitate KCNJ10/KCNJ16 potassium channel expression at the basolateral membrane in kidney tubular cells. Interacts with PRRG4 (via cytoplasmic domain).

It is found in the cell junction. The protein localises to the tight junction. Its subcellular location is the cytoplasm. The protein resides in the membrane. Its function is as follows. Plays a role in coupling actin fibers to cell junctions in endothelial cells, via its interaction with AMOTL2 and CDH5. May regulate acid-induced ASIC3 currents by modulating its expression at the cell surface. This Rattus norvegicus (Rat) protein is Membrane-associated guanylate kinase, WW and PDZ domain-containing protein 1 (Magi1).